A 68-amino-acid polypeptide reads, in one-letter code: uncharacterized protein (68 aa).

This is an uncharacterized protein from Archaeoglobus fulgidus (strain ATCC 49558 / DSM 4304 / JCM 9628 / NBRC 100126 / VC-16).